A 258-amino-acid chain; its full sequence is UPF0246 protein YaaA (258 aa).

This sequence belongs to the UPF0246 family.

The chain is UPF0246 protein YaaA from Shigella flexneri serotype 5b (strain 8401).